A 725-amino-acid chain; its full sequence is Glutamine-dependent NAD(+) synthetase (725 aa).

Positions 5-275 (VTVATCALNQ…VEVLTATLDL (271 aa)) constitute a CN hydrolase domain. The Proton acceptor; for glutaminase activity role is filled by Glu-45. Lys-114 acts as the For glutaminase activity in catalysis. The active-site Nucleophile; for glutaminase activity is Cys-175. Residues 325–706 (YHRPEEEISL…KTSQTLEEQI (382 aa)) are ligase. An ATP-binding site is contributed by 355–362 (PLSGGVDS). Ser-357 is a catalytic residue.

It in the C-terminal section; belongs to the NAD synthetase family. As to quaternary structure, homohexamer.

It carries out the reaction deamido-NAD(+) + L-glutamine + ATP + H2O = L-glutamate + AMP + diphosphate + NAD(+) + H(+). It participates in cofactor biosynthesis; NAD(+) biosynthesis; NAD(+) from deamido-NAD(+) (L-Gln route): step 1/1. Its function is as follows. Catalyzes the final step of the nicotinamide adenine dinucleotide (NAD) de novo synthesis pathway, the ATP-dependent amidation of deamido-NAD using L-glutamine as a nitrogen source. This Rattus norvegicus (Rat) protein is Glutamine-dependent NAD(+) synthetase (Nadsyn1).